A 145-amino-acid chain; its full sequence is 3-dehydroquinate dehydratase (145 aa).

The Proton acceptor role is filled by Tyr-23. Residues Asn-75, His-81, and Asp-88 each contribute to the substrate site. Catalysis depends on His-101, which acts as the Proton donor. Residues 102–103 (IS) and Arg-112 each bind substrate.

Belongs to the type-II 3-dehydroquinase family. As to quaternary structure, homododecamer.

The enzyme catalyses 3-dehydroquinate = 3-dehydroshikimate + H2O. The protein operates within metabolic intermediate biosynthesis; chorismate biosynthesis; chorismate from D-erythrose 4-phosphate and phosphoenolpyruvate: step 3/7. Its function is as follows. Catalyzes a trans-dehydration via an enolate intermediate. The polypeptide is 3-dehydroquinate dehydratase (Caldicellulosiruptor saccharolyticus (strain ATCC 43494 / DSM 8903 / Tp8T 6331)).